A 434-amino-acid polypeptide reads, in one-letter code: Serine protease HTRA2, mitochondrial (434 aa).

Residues tyrosine 34–aspartate 65 form a disordered region. The segment covering serine 35–aspartate 60 has biased composition (low complexity). The chain crosses the membrane as a helical span at residues leucine 74 to methionine 92. The short motif at alanine 85 to serine 88 is the IAP-binding element. Residues serine 151 to leucine 314 form a serine protease region. Active-site charge relay system residues include histidine 169, aspartate 201, and serine 278. A PDZ domain is found at methionine 337–glutamine 424.

The protein belongs to the peptidase S1C family. As to quaternary structure, interacts with th/DIAP1 (via BIR 2 domain).

The protein resides in the mitochondrion intermembrane space. It is found in the mitochondrion membrane. The catalysed reaction is Cleavage of non-polar aliphatic amino-acids at the P1 position, with a preference for Val, Ile and Met. At the P2 and P3 positions, Arg is selected most strongly with a secondary preference for other hydrophilic residues.. In terms of biological role, serine protease that shows proteolytic activity against a non-specific substrate beta-casein. Promotes or induces cell death either by direct binding to and inhibition of BIRC proteins (also called inhibitor of apoptosis proteins, IAPs), leading to an increase in caspase activity, or by a BIRC inhibition-independent, caspase-independent and serine protease activity-dependent mechanism. Can antagonize antiapoptotic activity of th/Diap1 by directly inducing the degradation of th/Diap1. This Drosophila willistoni (Fruit fly) protein is Serine protease HTRA2, mitochondrial.